We begin with the raw amino-acid sequence, 498 residues long: MSGYILAIDQGTTSTRSMLFDRNMRVVGLGQQEFTQHFPSSGWVEHDAEEIWKSVQSTIRIALAQAGISAADVAAIGITNQRETTVVWDRISGKPVHRAIVWQDRRTAQFCDELKRRNLEPLFTEKTGLLLDPYFSGTKLAWLLNHVPGLRERAQKGQVCFGTIDSWLIYKLTGGKAHVTDATNASRTLIYHIGENRWDDELLDILGIPAAMLPEVKDCAADFGMTDPALFGVSIPILGVAGDQQTAVIGNACFEPGMMKSTYGTGCFALLNTGTDRVTSSNRLLTTIAYRLDGVTTYALEGSIFIAGAAVQWLRDEMGFISVVSEVSALAEKADPNQRIYLVPAFTGLGAPYWDAEARGAIFGLTRGTGRAEFARAALESVAYQTFDLLEAMQGDWKGATNHTVLRVDGGMVASDWTMQRLADILNAPVDRPVFLETTVLGAAWLAASRAGIWPDRKGFSERWQRDCRFEPAMPEKERESAIAGWRDSVSRCLTRPQ.

T12 contacts ADP. 3 residues coordinate ATP: T12, T13, and S14. T12 is a sn-glycerol 3-phosphate binding site. R16 is an ADP binding site. R82, E83, Y134, and D243 together coordinate sn-glycerol 3-phosphate. Positions 82, 83, 134, 243, and 244 each coordinate glycerol. Residues T265 and G308 each coordinate ADP. ATP contacts are provided by T265, G308, Q312, and G411. G411 serves as a coordination point for ADP.

Belongs to the FGGY kinase family.

The enzyme catalyses glycerol + ATP = sn-glycerol 3-phosphate + ADP + H(+). Its pathway is polyol metabolism; glycerol degradation via glycerol kinase pathway; sn-glycerol 3-phosphate from glycerol: step 1/1. Its activity is regulated as follows. Inhibited by fructose 1,6-bisphosphate (FBP). In terms of biological role, key enzyme in the regulation of glycerol uptake and metabolism. Catalyzes the phosphorylation of glycerol to yield sn-glycerol 3-phosphate. In Brucella suis biovar 1 (strain 1330), this protein is Glycerol kinase.